The sequence spans 169 residues: Peptide methionine sulfoxide reductase MsrA (169 aa).

Cysteine 13 is an active-site residue.

The protein belongs to the MsrA Met sulfoxide reductase family.

The catalysed reaction is L-methionyl-[protein] + [thioredoxin]-disulfide + H2O = L-methionyl-(S)-S-oxide-[protein] + [thioredoxin]-dithiol. It catalyses the reaction [thioredoxin]-disulfide + L-methionine + H2O = L-methionine (S)-S-oxide + [thioredoxin]-dithiol. In terms of biological role, has an important function as a repair enzyme for proteins that have been inactivated by oxidation. Catalyzes the reversible oxidation-reduction of methionine sulfoxide in proteins to methionine. The chain is Peptide methionine sulfoxide reductase MsrA from Mycolicibacterium gilvum (strain PYR-GCK) (Mycobacterium gilvum (strain PYR-GCK)).